Here is a 229-residue protein sequence, read N- to C-terminus: Cytochrome c oxidase subunit 2 (229 aa).

Residues 1–26 (MATWSNLGLQDSASPLMEQLNFFHDH) lie on the Mitochondrial intermembrane side of the membrane. Residues 27–48 (TLLILIMITILVGYLMLMLFFN) form a helical membrane-spanning segment. The Mitochondrial matrix segment spans residues 49-62 (KFTNRFLLHGQTIE). Residues 63–82 (IIWTILPAIVLMFIALPSLR) form a helical membrane-spanning segment. Residues 83-229 (ILYLLDEINS…IKWITAMNSN (147 aa)) lie on the Mitochondrial intermembrane side of the membrane. Cu cation is bound by residues His-161, Cys-196, Glu-198, Cys-200, His-204, and Met-207. Glu-198 is a binding site for Mg(2+).

Belongs to the cytochrome c oxidase subunit 2 family. As to quaternary structure, component of the cytochrome c oxidase (complex IV, CIV), a multisubunit enzyme composed of a catalytic core of 3 subunits and several supernumerary subunits. The complex exists as a monomer or a dimer and forms supercomplexes (SCs) in the inner mitochondrial membrane with ubiquinol-cytochrome c oxidoreductase (cytochrome b-c1 complex, complex III, CIII). Cu cation serves as cofactor.

Its subcellular location is the mitochondrion inner membrane. It catalyses the reaction 4 Fe(II)-[cytochrome c] + O2 + 8 H(+)(in) = 4 Fe(III)-[cytochrome c] + 2 H2O + 4 H(+)(out). Its function is as follows. Component of the cytochrome c oxidase, the last enzyme in the mitochondrial electron transport chain which drives oxidative phosphorylation. The respiratory chain contains 3 multisubunit complexes succinate dehydrogenase (complex II, CII), ubiquinol-cytochrome c oxidoreductase (cytochrome b-c1 complex, complex III, CIII) and cytochrome c oxidase (complex IV, CIV), that cooperate to transfer electrons derived from NADH and succinate to molecular oxygen, creating an electrochemical gradient over the inner membrane that drives transmembrane transport and the ATP synthase. Cytochrome c oxidase is the component of the respiratory chain that catalyzes the reduction of oxygen to water. Electrons originating from reduced cytochrome c in the intermembrane space (IMS) are transferred via the dinuclear copper A center (CU(A)) of subunit 2 and heme A of subunit 1 to the active site in subunit 1, a binuclear center (BNC) formed by heme A3 and copper B (CU(B)). The BNC reduces molecular oxygen to 2 water molecules using 4 electrons from cytochrome c in the IMS and 4 protons from the mitochondrial matrix. This chain is Cytochrome c oxidase subunit 2 (COII), found in Simulium vittatum (Striped black fly).